A 144-amino-acid polypeptide reads, in one-letter code: 3-hydroxyacyl-[acyl-carrier-protein] dehydratase FabZ (144 aa).

H48 is an active-site residue.

It belongs to the thioester dehydratase family. FabZ subfamily.

The protein resides in the cytoplasm. The catalysed reaction is a (3R)-hydroxyacyl-[ACP] = a (2E)-enoyl-[ACP] + H2O. Involved in unsaturated fatty acids biosynthesis. Catalyzes the dehydration of short chain beta-hydroxyacyl-ACPs and long chain saturated and unsaturated beta-hydroxyacyl-ACPs. The sequence is that of 3-hydroxyacyl-[acyl-carrier-protein] dehydratase FabZ from Listeria innocua serovar 6a (strain ATCC BAA-680 / CLIP 11262).